Consider the following 98-residue polypeptide: NADH-ubiquinone oxidoreductase chain 4L (98 aa).

The next 3 membrane-spanning stretches (helical) occupy residues 1–21 (MTPI…GLAF), 26–46 (LLSA…ALSL), and 59–79 (APML…ALMV).

It belongs to the complex I subunit 4L family.

The protein localises to the mitochondrion membrane. It catalyses the reaction a ubiquinone + NADH + 5 H(+)(in) = a ubiquinol + NAD(+) + 4 H(+)(out). Its function is as follows. Core subunit of the mitochondrial membrane respiratory chain NADH dehydrogenase (Complex I) which catalyzes electron transfer from NADH through the respiratory chain, using ubiquinone as an electron acceptor. Part of the enzyme membrane arm which is embedded in the lipid bilayer and involved in proton translocation. This Tetraodon nigroviridis (Spotted green pufferfish) protein is NADH-ubiquinone oxidoreductase chain 4L (MT-ND4L).